The chain runs to 572 residues: Phosphoenolpyruvate-protein phosphotransferase (572 aa).

Residue His-191 is the Tele-phosphohistidine intermediate of the active site. The phosphoenolpyruvate site is built by Arg-298 and Arg-334. Mg(2+)-binding residues include Glu-433 and Asp-457. Phosphoenolpyruvate contacts are provided by residues 456–457 (ND) and Arg-467. The active-site Proton donor is the Cys-504.

Belongs to the PEP-utilizing enzyme family. Homodimer. It depends on Mg(2+) as a cofactor.

Its subcellular location is the cytoplasm. It carries out the reaction L-histidyl-[protein] + phosphoenolpyruvate = N(pros)-phospho-L-histidyl-[protein] + pyruvate. Its function is as follows. General (non sugar-specific) component of the phosphoenolpyruvate-dependent sugar phosphotransferase system (sugar PTS). This major carbohydrate active-transport system catalyzes the phosphorylation of incoming sugar substrates concomitantly with their translocation across the cell membrane. Enzyme I transfers the phosphoryl group from phosphoenolpyruvate (PEP) to the phosphoryl carrier protein (HPr). The sequence is that of Phosphoenolpyruvate-protein phosphotransferase (ptsI) from Staphylococcus epidermidis (strain ATCC 35984 / DSM 28319 / BCRC 17069 / CCUG 31568 / BM 3577 / RP62A).